The primary structure comprises 236 residues: Virion protein US10 homolog (236 aa).

The disordered stretch occupies residues 1-32 (MDGAYGHVHNGSPMAVDGEESGAGTGTGAGAD). Residues 21–31 (SGAGTGTGAGA) show a composition bias toward gly residues. The segment at 138–150 (CAYWCCLGHAFAC) is a zinc-finger region.

Belongs to the herpesviridae US10 family. Phosphorylated.

It is found in the virion tegument. The protein localises to the host nucleus matrix. The polypeptide is Virion protein US10 homolog (Equine herpesvirus 1 (strain Ab4p) (EHV-1)).